The following is a 399-amino-acid chain: tRNA-specific 2-thiouridylase MnmA (399 aa).

Residues 21–28 (AMSGGVDS) and Leu-47 contribute to the ATP site. The active-site Nucleophile is the Cys-115. A disulfide bond links Cys-115 and Cys-211. Gly-139 contributes to the ATP binding site. The segment at 161 to 163 (RDQ) is interaction with tRNA. Cys-211 acts as the Cysteine persulfide intermediate in catalysis.

The protein belongs to the MnmA/TRMU family.

Its subcellular location is the cytoplasm. The catalysed reaction is S-sulfanyl-L-cysteinyl-[protein] + uridine(34) in tRNA + AH2 + ATP = 2-thiouridine(34) in tRNA + L-cysteinyl-[protein] + A + AMP + diphosphate + H(+). Its function is as follows. Catalyzes the 2-thiolation of uridine at the wobble position (U34) of tRNA, leading to the formation of s(2)U34. This is tRNA-specific 2-thiouridylase MnmA from Parvibaculum lavamentivorans (strain DS-1 / DSM 13023 / NCIMB 13966).